Consider the following 506-residue polypeptide: UDP-N-acetylglucosamine--peptide N-acetylglucosaminyltransferase GtfA subunit (506 aa).

An N-terminus R-fold-1 region spans residues Met-1–Thr-78. Gly-16–Tyr-19 is a binding site for UDP. Positions Val-79–Tyr-195 are extended beta-sheet domain. The tract at residues Ser-196–Gly-306 is C-terminus R-fold-1. His-242 lines the N-acetyl-D-glucosamine pocket. The R-fold-2 stretch occupies residues Ser-307 to Leu-506. UDP is bound by residues Arg-328, Tyr-357, and Gly-383–Ala-385. Residue Gly-405 to Gly-407 participates in N-acetyl-D-glucosamine binding. UDP is bound at residue Thr-409.

It belongs to the glycosyltransferase group 1 family. Glycosyltransferase 4 subfamily. As to quaternary structure, forms a heterotetramer with 2 subunits each of GtfA and GtfB. Part of the accessory SecA2/SecY2 protein translocation apparatus required to export cell wall protein GspB.

It is found in the cytoplasm. The protein resides in the cell membrane. The enzyme catalyses L-seryl-[protein] + UDP-N-acetyl-alpha-D-glucosamine = 3-O-[N-acetyl-alpha-D-glucosaminyl]-L-seryl-[protein] + UDP + H(+). Its pathway is protein modification; protein glycosylation. Functionally, required for polymorphic O-glycosylation of GspB, a serine-rich repeat cell wall protein encoded upstream in the same operon. Catalyzes the first step in glycosylation by transferring N-acetylglucosamine from UDP-GlcNAc to serine residues in GspB. Part of the accessory SecA2/SecY2 system specifically required to export GspB. Upon coexpression in E.coli with GtfB glycosylates GspB constructs. Glycosylation probably occurs intracellularly. Requires GtfB for glycosylation activity, it has no activity alone. Does not use UDP-glucose as substrate. Has a fast, probably processive glycosylation phase followed by a slower, non-processive phase. The enzyme probably modifies its tertiary conformation by opening and closing its intersubunit interfaces to accomodate the increasingly glycosylated substrate; protein substrate recognition is provided by GtfB. This Streptococcus gordonii protein is UDP-N-acetylglucosamine--peptide N-acetylglucosaminyltransferase GtfA subunit.